Here is a 192-residue protein sequence, read N- to C-terminus: Fe/S biogenesis protein NfuA (192 aa).

The [4Fe-4S] cluster site is built by C149 and C152.

Belongs to the NfuA family. Homodimer. The cofactor is [4Fe-4S] cluster.

Functionally, involved in iron-sulfur cluster biogenesis. Binds a 4Fe-4S cluster, can transfer this cluster to apoproteins, and thereby intervenes in the maturation of Fe/S proteins. Could also act as a scaffold/chaperone for damaged Fe/S proteins. In Shewanella piezotolerans (strain WP3 / JCM 13877), this protein is Fe/S biogenesis protein NfuA.